Reading from the N-terminus, the 345-residue chain is Flotillin-like protein FloA 1 (345 aa).

Residues 26 to 46 (LLLLVGVFLALFFAAVLGFFF) traverse the membrane as a helical segment.

Belongs to the flotillin-like FloA family. As to quaternary structure, homooligomerizes.

The protein localises to the cell membrane. It is found in the membrane raft. Functionally, found in functional membrane microdomains (FMM) that may be equivalent to eukaryotic membrane rafts. FMMs are highly dynamic and increase in number as cells age. Flotillins are thought to be important factors in membrane fluidity. The chain is Flotillin-like protein FloA 1 from Rhodopirellula baltica (strain DSM 10527 / NCIMB 13988 / SH1).